Consider the following 405-residue polypeptide: Tryptophan synthase beta chain (405 aa).

Lys-98 is subject to N6-(pyridoxal phosphate)lysine.

The protein belongs to the TrpB family. As to quaternary structure, tetramer of two alpha and two beta chains. Pyridoxal 5'-phosphate is required as a cofactor.

It carries out the reaction (1S,2R)-1-C-(indol-3-yl)glycerol 3-phosphate + L-serine = D-glyceraldehyde 3-phosphate + L-tryptophan + H2O. The protein operates within amino-acid biosynthesis; L-tryptophan biosynthesis; L-tryptophan from chorismate: step 5/5. Its function is as follows. The beta subunit is responsible for the synthesis of L-tryptophan from indole and L-serine. This chain is Tryptophan synthase beta chain, found in Afipia carboxidovorans (strain ATCC 49405 / DSM 1227 / KCTC 32145 / OM5) (Oligotropha carboxidovorans).